Here is an 82-residue protein sequence, read N- to C-terminus: Cobrotoxin-b (82 aa).

Positions 1 to 21 (MKTLLLTLLVVTIVCLDLGYT) are cleaved as a signal peptide. 4 cysteine pairs are disulfide-bonded: cysteine 24-cysteine 44, cysteine 38-cysteine 61, cysteine 63-cysteine 74, and cysteine 75-cysteine 80.

This sequence belongs to the three-finger toxin family. Short-chain subfamily. Type I alpha-neurotoxin sub-subfamily. Expressed by the venom gland.

The protein resides in the secreted. Its function is as follows. Binds to muscle nicotinic acetylcholine receptor (nAChR) and inhibit acetylcholine from binding to the receptor, thereby impairing neuromuscular transmission. Produces peripheral paralysis by blocking neuromuscular transmission at the postsynaptic site. Has a lower toxicity than cobrotoxin. This Naja atra (Chinese cobra) protein is Cobrotoxin-b.